We begin with the raw amino-acid sequence, 231 residues long: uncharacterized protein (231 aa).

3 helical membrane passes run 6 to 26 (IKLI…YKYI), 39 to 59 (NIVS…STFS), and 66 to 86 (FCFQ…GYAF).

The protein resides in the cell membrane. This is an uncharacterized protein from Rickettsia prowazekii (strain Madrid E).